The primary structure comprises 629 residues: 5-aminolevulinate synthase, mitochondrial (629 aa).

Residues 1–69 (MDSVLRQSKA…VQSARTGGRA (69 aa)) constitute a mitochondrion transit peptide. Positions 155, 268, and 287 each coordinate substrate. Residues serine 320, histidine 348, and threonine 388 each contribute to the pyridoxal 5'-phosphate site. Lysine 391 is a catalytic residue. Lysine 391 carries the N6-(pyridoxal phosphate)lysine modification. Threonine 420 and threonine 421 together coordinate pyridoxal 5'-phosphate. Threonine 506 lines the substrate pocket.

This sequence belongs to the class-II pyridoxal-phosphate-dependent aminotransferase family. As to quaternary structure, homodimer. Pyridoxal 5'-phosphate serves as cofactor.

It localises to the mitochondrion matrix. The enzyme catalyses succinyl-CoA + glycine + H(+) = 5-aminolevulinate + CO2 + CoA. It participates in porphyrin-containing compound metabolism; protoporphyrin-IX biosynthesis; 5-aminolevulinate from glycine: step 1/1. Its function is as follows. Catalyzes the synthesis of 5-aminolevulinate (ALA) from succinyl-CoA and glycine, the first and rate-limiting step in heme biosynthesis. This chain is 5-aminolevulinate synthase, mitochondrial (alv-1), found in Neurospora crassa (strain ATCC 24698 / 74-OR23-1A / CBS 708.71 / DSM 1257 / FGSC 987).